The chain runs to 676 residues: RNA helicase NPH-II (676 aa).

A Helicase ATP-binding domain is found at Phe172–His347. Residue Gly185–Thr192 participates in ATP binding. The DEXH box signature appears at Asp296–His299. Residues Asn366–Leu542 form the Helicase C-terminal domain.

This sequence belongs to the DEAD box helicase family. DEAH subfamily. As to quaternary structure, monomer.

Its subcellular location is the virion. It carries out the reaction ATP + H2O = ADP + phosphate + H(+). In terms of biological role, NTP-dependent helicase that catalyzes unidirectional unwinding of 3'tailed duplex RNAs and plays an important role during transcription of early mRNAs, presumably by preventing R-loop formation behind the elongating RNA polymerase. Might also play a role in the export of newly synthesized mRNA chains out of the core into the cytoplasm. Required for replication and propagation of viral particles. The polypeptide is RNA helicase NPH-II (OPG084) (Homo sapiens (Human)).